The chain runs to 122 residues: Large ribosomal subunit protein bL12 (122 aa).

It belongs to the bacterial ribosomal protein bL12 family. As to quaternary structure, homodimer. Part of the ribosomal stalk of the 50S ribosomal subunit. Forms a multimeric L10(L12)X complex, where L10 forms an elongated spine to which 2 to 4 L12 dimers bind in a sequential fashion. Binds GTP-bound translation factors.

Functionally, forms part of the ribosomal stalk which helps the ribosome interact with GTP-bound translation factors. Is thus essential for accurate translation. In Stutzerimonas stutzeri (strain A1501) (Pseudomonas stutzeri), this protein is Large ribosomal subunit protein bL12.